An 84-amino-acid chain; its full sequence is Protein Tlp homolog (84 aa).

The interval 1–20 is disordered; sequence MGKEERYTKKPKPDDRSDNV.

The protein belongs to the Tlp family.

This Caldanaerobacter subterraneus subsp. tengcongensis (strain DSM 15242 / JCM 11007 / NBRC 100824 / MB4) (Thermoanaerobacter tengcongensis) protein is Protein Tlp homolog.